We begin with the raw amino-acid sequence, 92 residues long: Large ribosomal subunit protein bL28 (92 aa).

Belongs to the bacterial ribosomal protein bL28 family.

The protein is Large ribosomal subunit protein bL28 of Borrelia hermsii (strain HS1 / DAH).